The primary structure comprises 247 residues: uncharacterized protein (247 aa).

Positions 161–187 (KEQSDATSDATTSEKNKSPECPKATTE) are disordered. Positions 172–187 (TSEKNKSPECPKATTE) are enriched in basic and acidic residues.

This is an uncharacterized protein from Mus musculus (Mouse).